The following is a 284-amino-acid chain: Bifunctional protein FolD (284 aa).

Residues 166 to 168 and Ile232 each bind NADP(+); that span reads GAS.

This sequence belongs to the tetrahydrofolate dehydrogenase/cyclohydrolase family. As to quaternary structure, homodimer.

The catalysed reaction is (6R)-5,10-methylene-5,6,7,8-tetrahydrofolate + NADP(+) = (6R)-5,10-methenyltetrahydrofolate + NADPH. It catalyses the reaction (6R)-5,10-methenyltetrahydrofolate + H2O = (6R)-10-formyltetrahydrofolate + H(+). Its pathway is one-carbon metabolism; tetrahydrofolate interconversion. Functionally, catalyzes the oxidation of 5,10-methylenetetrahydrofolate to 5,10-methenyltetrahydrofolate and then the hydrolysis of 5,10-methenyltetrahydrofolate to 10-formyltetrahydrofolate. The polypeptide is Bifunctional protein FolD (Pseudomonas fluorescens (strain Pf0-1)).